The chain runs to 125 residues: Cu-Zn superoxide dismutase-like protein (125 aa).

Residues Cys52 and Cys102 are joined by a disulfide bond.

It belongs to the Cu-Zn superoxide dismutase family.

The protein localises to the host cytoplasm. In terms of biological role, virion protein with no enzymatic activity. This chain is Cu-Zn superoxide dismutase-like protein, found in Bos taurus (Bovine).